Consider the following 339-residue polypeptide: Alpha-N-dichloroacetyl-p-aminophenylserinol N-oxygenase (339 aa).

Residues 1 to 19 show a composition bias toward basic and acidic residues; it reads MRDHTDEKSEAAGNDDGHV. The segment at 1 to 22 is disordered; sequence MRDHTDEKSEAAGNDDGHVRIG. Fe cation contacts are provided by Glu-109, Glu-144, His-147, Glu-205, His-232, Glu-236, and His-239.

Belongs to the AurF N-oxygenase family. Fe(2+) is required as a cofactor.

The catalysed reaction is alpha-N-dichloroacetyl-p-aminophenylserinol + AH2 + 2 O2 = chloramphenicol + A + 2 H2O. It participates in antibiotic biosynthesis. Its function is as follows. Involved in chloramphenicol biosynthesis. Catalyzes the six-electron oxidation of an aryl-amine precursor of chloramphenicol (NH2-CAM) to yield the aryl-nitro group of chloramphenicol (CAM). During catalysis, upon exposure of the diferrous cluster to O(2), ClmI forms an exceptionally long-lived peroxo intermediate (CmlI-peroxo), which reacts with NH2-CAM to form CAM. The protein is Alpha-N-dichloroacetyl-p-aminophenylserinol N-oxygenase of Streptomyces venezuelae (strain ATCC 10712 / CBS 650.69 / DSM 40230 / JCM 4526 / NBRC 13096 / PD 04745).